We begin with the raw amino-acid sequence, 227 residues long: Cytochrome c oxidase subunit 2 (227 aa).

At 1–14 the chain is on the mitochondrial intermembrane side; that stretch reads MAHSFQLGFQDATS. A helical membrane pass occupies residues 15 to 45; that stretch reads PIMEELLHFHDHTLMIVFLISSLVLYIITLM. At 46–59 the chain is on the mitochondrial matrix side; it reads LTTKLTHTSTMDAQ. Residues 60–87 traverse the membrane as a helical segment; the sequence is EVETVWTILPAIILILIALPSLRILYLM. Topologically, residues 88–227 are mitochondrial intermembrane; that stretch reads DEINTPSLTV…HFENWSTSMI (140 aa). Positions 161, 196, 198, 200, 204, and 207 each coordinate Cu cation. Glu198 contributes to the Mg(2+) binding site.

The protein belongs to the cytochrome c oxidase subunit 2 family. As to quaternary structure, component of the cytochrome c oxidase (complex IV, CIV), a multisubunit enzyme composed of 14 subunits. The complex is composed of a catalytic core of 3 subunits MT-CO1, MT-CO2 and MT-CO3, encoded in the mitochondrial DNA, and 11 supernumerary subunits COX4I, COX5A, COX5B, COX6A, COX6B, COX6C, COX7A, COX7B, COX7C, COX8 and NDUFA4, which are encoded in the nuclear genome. The complex exists as a monomer or a dimer and forms supercomplexes (SCs) in the inner mitochondrial membrane with NADH-ubiquinone oxidoreductase (complex I, CI) and ubiquinol-cytochrome c oxidoreductase (cytochrome b-c1 complex, complex III, CIII), resulting in different assemblies (supercomplex SCI(1)III(2)IV(1) and megacomplex MCI(2)III(2)IV(2)). Found in a complex with TMEM177, COA6, COX18, COX20, SCO1 and SCO2. Interacts with TMEM177 in a COX20-dependent manner. Interacts with COX20. Interacts with COX16. Requires Cu cation as cofactor.

Its subcellular location is the mitochondrion inner membrane. It carries out the reaction 4 Fe(II)-[cytochrome c] + O2 + 8 H(+)(in) = 4 Fe(III)-[cytochrome c] + 2 H2O + 4 H(+)(out). Functionally, component of the cytochrome c oxidase, the last enzyme in the mitochondrial electron transport chain which drives oxidative phosphorylation. The respiratory chain contains 3 multisubunit complexes succinate dehydrogenase (complex II, CII), ubiquinol-cytochrome c oxidoreductase (cytochrome b-c1 complex, complex III, CIII) and cytochrome c oxidase (complex IV, CIV), that cooperate to transfer electrons derived from NADH and succinate to molecular oxygen, creating an electrochemical gradient over the inner membrane that drives transmembrane transport and the ATP synthase. Cytochrome c oxidase is the component of the respiratory chain that catalyzes the reduction of oxygen to water. Electrons originating from reduced cytochrome c in the intermembrane space (IMS) are transferred via the dinuclear copper A center (CU(A)) of subunit 2 and heme A of subunit 1 to the active site in subunit 1, a binuclear center (BNC) formed by heme A3 and copper B (CU(B)). The BNC reduces molecular oxygen to 2 water molecules using 4 electrons from cytochrome c in the IMS and 4 protons from the mitochondrial matrix. The chain is Cytochrome c oxidase subunit 2 (MT-CO2) from Cephalopachus bancanus (Western tarsier).